Consider the following 422-residue polypeptide: Dioxygenase str8 (422 aa).

Residues Cys-73, Cys-75, Cys-78, and His-119 each coordinate Zn(2+). His-243, Asp-245, and His-382 together coordinate Fe cation.

This sequence belongs to the gamma-BBH/TMLD family. Fe(2+) serves as cofactor.

It participates in mycotoxin biosynthesis. In terms of biological role, dioxygenase; part of the gene cluster that mediates the biosynthesis of strobilurin A, an antifungal polyketide that contains a key beta-methoxyacrylate toxophore that targets the complex III of the mitochondrial electron transport chain. Strobilurin biosynthesis begins with construction of benzoyl CoA by step-wise elimination of ammonia from phenylalanine by the phenylalanine ammonia-lyase str11, oxygenation by str8 and retro-Claisen reaction to form benzoic acid, which is activated to its CoA thiolester benzoyl CoA by the dedicated CoA ligase str10. Benzoyl CoA forms the starter unit for the highly reducing polyketide synthase stpks1 that produces the polyketide prestrobilutin A. The FAD-dependent oxygenase str9 then catalyzes the key oxidative rearrangement responsible for the creation of the beta-methoxyacrylate toxophore. Str9 performs epoxidation of the 2,3 olefin of prestrobilutin A, followed by Meinwald rearrangement to furnish the aldehyde intermediate. Rapid enolization of the aldehyde intermediate would give the beta-methoxyacrylate skeleton and methylations catalyzed by str2 and str3 complete the synthesis and lead to the production of strobilurin A. The short-chain dehydrogenase stl2 and the dehydrogenase str4 play a role in the shunt pathway leading to the production of bolineol. The cluster encodes no obvious halogenase gene that could be involved in production of strobilurin B, nor any obvious dimethylallyl-transferase that could be involved in the production of strobilurin G. It is possible that unknown proteins encoded in, or near, the cluster (such as str1 or stl1) may form new classes of halogenases or dimethylally-transferases, or that the responsible genes are located elsewhere on the genome. Similarly, proteins encoded by str5/str6 hydrolases appear to have no chemical role in the biosynthesis of strobilurin A. Finally, no obvious self-resistance gene is found within the cluster. In Strobilurus tenacellus, this protein is Dioxygenase str8.